The primary structure comprises 858 residues: Adenylate cyclase, germination specific (858 aa).

The Cytoplasmic segment spans residues 1–18; sequence MKKTFVKILSKSYVEGYP. Residues 19-41 traverse the membrane as a helical; Signal-anchor for type II membrane protein segment; that stretch reads VGFFIGLIILAIFGSMVCIFSFM. The Extracellular portion of the chain corresponds to 42–858; the sequence is HYSEEENSNI…DENVESKKNK (817 aa). The CHASE domain occupies 86-317; that stretch reads VNPNFDRNDF…DCVLKLWIFT (232 aa). Residues 396 to 526 enclose the Guanylate cyclase domain; the sequence is CVFFLDIAGF…DTVNVASRME (131 aa). Positions 401, 402, and 445 each coordinate Mg(2+). Disordered stretches follow at residues 650 to 691, 767 to 803, and 827 to 858; these read YYYH…YHDT, SDNVNNYENNNNFSDKIENNDGDNNNINDNNYKSTNE, and ENCDNNDDNNNNNNNNNNNNNNDENVESKKNK. Composition is skewed to low complexity over residues 767–778, 788–797, and 834–849; these read SDNVNNYENNNN, GDNNNINDNN, and DNNNNNNNNNNNNNND.

This sequence belongs to the adenylyl cyclase class-4/guanylyl cyclase family.

The protein localises to the membrane. The catalysed reaction is ATP = 3',5'-cyclic AMP + diphosphate. With respect to regulation, insensitive to guanine nucleotides. Has a large extracellular domain which may be involved in the recognition of an extracellular signal present during germination, leading to activation or inhibition of cAMP synthesis by the cytoplasmic domain. This Dictyostelium discoideum (Social amoeba) protein is Adenylate cyclase, germination specific (acgA).